The following is a 576-amino-acid chain: Arginine--tRNA ligase (576 aa).

The 'HIGH' region motif lies at alanine 126–histidine 136.

Belongs to the class-I aminoacyl-tRNA synthetase family. Monomer.

It localises to the cytoplasm. It catalyses the reaction tRNA(Arg) + L-arginine + ATP = L-arginyl-tRNA(Arg) + AMP + diphosphate. The chain is Arginine--tRNA ligase from Rickettsia rickettsii (strain Iowa).